The sequence spans 669 residues: uncharacterized protein (669 aa).

Helical transmembrane passes span 39–61, 124–146, 153–175, 190–212, 221–243, and 263–285; these read LCPL…GTSW, ISLW…LISI, GIIY…YALG, GLAF…FFGV, FAPG…QTAL, and IAAG…IRYL. 2 consecutive RCK C-terminal domains span residues 316–397 and 398–483; these read AGSL…KLIG and KESD…LGGR. A run of 5 helical transmembrane segments spans residues 484-506, 516-538, 558-580, 585-607, and 645-667; these read PILN…GYIF, IPFA…YWRS, IGLN…ESFH, IWVA…VVGI, and VPYP…FAML.

This sequence belongs to the AAE transporter (TC 2.A.81) family.

It localises to the cell membrane. This is an uncharacterized protein from Desulfotalea psychrophila (strain LSv54 / DSM 12343).